The chain runs to 252 residues: uncharacterized protein (252 aa).

Positions 1-23 (MKLLKTVPAIVMLAGGMFASLNA) are cleaved as a signal peptide. The disordered stretch occupies residues 231–252 (EPPESAPEHTDRRTTLSLGYSM).

This is an uncharacterized protein from Escherichia coli (strain K12).